A 475-amino-acid polypeptide reads, in one-letter code: Protein ABCI7, chloroplastic (475 aa).

The N-terminal 36 residues, 1-36, are a transit peptide targeting the chloroplast; that stretch reads MAAATVLGRLSLIPNLSSKPKLKSNRRTTSTSVSVR.

Interacts with NAP7.

The protein resides in the plastid. It localises to the chloroplast. This chain is Protein ABCI7, chloroplastic (ABCI7), found in Arabidopsis thaliana (Mouse-ear cress).